The primary structure comprises 418 residues: NADH-quinone oxidoreductase subunit H (418 aa).

9 helical membrane passes run 15–35 (LVLG…LVAI), 83–103 (FVYF…FAFI), 123–143 (LPVA…GIVL), 164–184 (VISY…YAGS), 197–217 (VWFV…MVGE), 262–282 (LATA…MWAG), 287–307 (WWPV…YFWL), 321–341 (GLGW…AAVI), and 349–369 (YAHW…ALVL). The interval 394–418 (AAHRAGFHPGIPDTAAAGESAGGRE) is disordered.

It belongs to the complex I subunit 1 family. In terms of assembly, NDH-1 is composed of 14 different subunits. Subunits NuoA, H, J, K, L, M, N constitute the membrane sector of the complex.

The protein localises to the cell membrane. The catalysed reaction is a quinone + NADH + 5 H(+)(in) = a quinol + NAD(+) + 4 H(+)(out). In terms of biological role, NDH-1 shuttles electrons from NADH, via FMN and iron-sulfur (Fe-S) centers, to quinones in the respiratory chain. The immediate electron acceptor for the enzyme in this species is believed to be menaquinone. Couples the redox reaction to proton translocation (for every two electrons transferred, four hydrogen ions are translocated across the cytoplasmic membrane), and thus conserves the redox energy in a proton gradient. This subunit may bind ubiquinone. The sequence is that of NADH-quinone oxidoreductase subunit H from Mycobacterium avium (strain 104).